The primary structure comprises 2475 residues: MGNRGSSTSSRPPLSSEANIYAKLQDHIQRQTRPFSGGGYFNGGGDKNPVQHIKDYHIDSVSSKAKLRIIEGIIKAISKIGFKIDTKQPIEDILKDIKKQLPDPRAGSTFVKNAEKQETVCKMIADAINQEFIDLGQDKLIDTTEGAASICRQIVLYINSLTHGLRAEYLDVHGSIENTLENIKLLNDAIKQLHERMVTEVTKAAPNEEVINAVTMIEAVYRRLLNEQNLQISILTNFIDNILTPTQKELDKLQTDEVDIIKLLNDTNSVLGTKNFGKVLSYTLCNLGIAASVANKINKALQRVGLKVEQYLQSKNWAEFDKELDLKRFSGLVSAENIAEFEKAVNLLRQTFNERHKILENNCAKKGGDEVKTPLDKRIEAQRLDRKHILMEFLNKSTQAYNDFLENVKKIGIKLVKEIALTPNITRLRDALSRINDMGTIALDLSLIGFYTNAAAREERETFLTQLTLVKNVLEEISKTDPNFKNLYDSCFRLLQIIDFYTDIVQKKYGGGEDCECTRVGGAALTVEELGLSKAARSQVDLNQAINTFMYYYYVAQIYSNLTHNKQEFQSYEENYATILGDAIAGRLMQLDTEKNARINSPAVDLARGHVGPNPGGAQEVDWKAAVSAIELEYDVKRRFYRALEGLDLYLKNITKTFVNNIDSIQTVQQMLDGVRIIGRWFTEATGDTLAQVFESFPTSAGNDSNVFTDNAPAGHYYEKVAAEIQQGRSVGTLRPVRASQAKNIRDLIGRSLSNFQALKNIINAFARIGDMLGGEELRQMVPMSPLQIYKTLLEYLQHSALSVGLKNLNQSEIGGQRMALAQTAEEAAQRVYLSTVRVNDALSSRWETEDMFFTFMLKSMAAKIFIVLGIYDMFERPEPVYKLIPTRMILGGADELEPEVIPEAAELYFRLPRLAEFYQKLFSFRDGNVQISMLPELEGIFSGLIRIIFMRPIELINIGDYSETEIRQLIKEINVIYQHFNLEYGEQEATKKALIHFVNEINRRFGVITRTEWEKFQRIVQEARTMNDFGMMNQTNYSILPDEDGYTQSSQLLPSDRFIGPSSQPTPKWRPALYNIDSVDVQTGMLQPNSQWDLVQKFRKQLSEMFEDPSLQQELGKISYQELIRQAINELKKEHTDKIQIVSKLIQGSESLADTDVNKIFLFHETVITGLNLLSAIYVLLNNFRNNIKGLDLDTIQKSIIEWLRETQPPDVNHANLLDWLGRKHGAISEIRNPGLVVKANNARLSEVYPDPTTDANTPQDRNLTTETLFAWIVQYVGIPAGGGVRPEQELAARYLVDNQRIMQLLLTNIFEITSSFNKMIQVRFPETSTAHVHLDFTGLISLIDSLMADTKYFLDLLRPHIDKNIIQYYENRSNPGSFYWLEEHLIDKLIKPPTDARGRPLPGGELGLEGVNQIINKTYTLLTKPYNVLQLRGGAQRRDAANIQINNNPQSSERFEQYGRVFSKLVFYDALENNSGLRVEQVALGDFRLSNLIRTNNAQEENTLSYWDNIALRTYANVNDAANNLRRYRLYGSDYGIQNNRSMMMVFNQLIASYITRFYDAPSGKIYLNLINAFANGNFSQAVMEMGYAHPDLARNNNAFGHRGDPTEQSVLLLSLGLILQRLIKDTNRQGLSQHLISTLTEIPIYLKENYRANLPLFNKMFNILISQGELLKQFIQYTNVQLARPNLTALLRANNDSVIYYNNNNVPMTGLSIGQAAMRGIGGVFRPNVTLMPLGDAQNNTSDIVRKRLVAVIDGIIRGSHTLADSAMEVLHELTDHPIYLETEEHFIQNYMSRYNKEPLMPFSLSLYYLRDLRIENNEVYDPLLYPNLESGSPEFKLLYGTRKLLGNDPVQLSDMPGVQLIMKNYNETVVAREQITPTRFEHFYTHAIQALRFIVNIRSFKTVMTYNENTFGGVNLISEDRNDKPIITAGIGMNAVYSLRKTLQDVISFVESSYQEEQINNIHKIVSPKGQTRTLGSNRERERIFNLFDMNIIPINVNALMRSIPLANIYNYDYSFEEIACLMYGISAEKVRSLNTAAPQPDVAEVLNIPNRPPINTREFMLKLLINPYVSVSITQYGNELLSKGNAGYMSRIFRGDNALNMGRPKFLSDQIFNKVLFGSLYPTQFDYDEAGPSLAAGIQRGRERWGHPMSIYINQALHEIVRTIRLAETVRGLRNVIDRNQIIGELNAFRTQLEDTLREVNNLVQTPEIQNNPTPEIIAAVQNWGQQYRAQITDLIDLIGNAGQANSMISLIQNINVQTAGAQLTALFNRRGLPAPPPRQVLQNDIEAIQWFMTIVINHPPILIAPFMLLVNNLKEFLNTLERYVYKTPRWLGPGTARIAQPPVGMAPGINMRHHTSYTENSVLTYITEQNREEGPWSIVKQVGVGIQKPTLVQIGKDRFDTRLIRNLIFITNVQRLLRLRLNLELSQFRNVLVSPDHIINPSITEYGFSITGPSETFSDKQYDSDIRIL.

Glycine 2 is lipidated: N-myristoyl glycine; by host. Residues 2184-2211 (RNQIIGELNAFRTQLEDTLREVNNLVQT) adopt a coiled-coil conformation.

This sequence belongs to the asfivirus polyprotein pp220 family. Post-translationally, specific enzymatic cleavages in vivo by the viral pS273R protease yield mature proteins.

It localises to the host cytoplasm. Its subcellular location is the host perinuclear region. The protein resides in the virion. It is found in the host nucleus. Essential for the core assembly. Its myristoyl moiety may function as a membrane-anchoring signal to bind the developing core shell to the inner viral envelope. Its function is as follows. The structural protein p34 is a component of the virus core shell. In terms of biological role, the structural protein p14 is a component of the virus core shell. Functionally, the structural protein p37 is a component of the virus core shell. The structural protein p150 is a component of the virus core shell. The sequence is that of Polyprotein pp220 from African swine fever virus (isolate Tick/Malawi/Lil 20-1/1983) (ASFV).